A 104-amino-acid polypeptide reads, in one-letter code: Replication restart protein PriB (104 aa).

The region spanning 1–101 is the SSB domain; that stretch reads MTNRLVLSGT…LHAEQIELID (101 aa).

Belongs to the PriB family. As to quaternary structure, homodimer. Interacts with PriA and DnaT. Component of the replication restart primosome. Primosome assembly occurs via a 'hand-off' mechanism. PriA binds to replication forks, subsequently PriB then DnaT bind; DnaT then displaces ssDNA to generate the helicase loading substrate.

In terms of biological role, involved in the restart of stalled replication forks, which reloads the replicative helicase on sites other than the origin of replication; the PriA-PriB pathway is the major replication restart pathway. During primosome assembly it facilitates complex formation between PriA and DnaT on DNA; stabilizes PriA on DNA. Stimulates the DNA unwinding activity of PriA helicase. The polypeptide is Replication restart protein PriB (Escherichia coli (strain ATCC 8739 / DSM 1576 / NBRC 3972 / NCIMB 8545 / WDCM 00012 / Crooks)).